We begin with the raw amino-acid sequence, 252 residues long: Triosephosphate isomerase (252 aa).

10-12 (NWK) contributes to the substrate binding site. Histidine 96 acts as the Electrophile in catalysis. Glutamate 168 acts as the Proton acceptor in catalysis. Substrate is bound by residues glycine 174, serine 214, and 235–236 (GG).

The protein belongs to the triosephosphate isomerase family. In terms of assembly, homodimer.

The protein localises to the cytoplasm. It catalyses the reaction D-glyceraldehyde 3-phosphate = dihydroxyacetone phosphate. It functions in the pathway carbohydrate biosynthesis; gluconeogenesis. Its pathway is carbohydrate degradation; glycolysis; D-glyceraldehyde 3-phosphate from glycerone phosphate: step 1/1. Involved in the gluconeogenesis. Catalyzes stereospecifically the conversion of dihydroxyacetone phosphate (DHAP) to D-glyceraldehyde-3-phosphate (G3P). This chain is Triosephosphate isomerase, found in Lactobacillus helveticus (strain DPC 4571).